Here is a 443-residue protein sequence, read N- to C-terminus: Dynein regulatory complex protein 9 (443 aa).

2 disordered regions span residues M1–E34 and G415–K443. In terms of domain architecture, IQ spans E393 to K422. The segment covering G415–G430 has biased composition (basic and acidic residues). Residues K431–K443 are compositionally biased toward basic residues.

Belongs to the DRC9 family. As to quaternary structure, component of the nexin-dynein regulatory complex (N-DRC). Interacts (via IQ domain) with CALM when calcium levels are low. Does not interact with CALM in the presence of Ca(2+). Interacts with the HSP70 proteins HSPA1L and HSPA8. May form a complex with CAMK4 and HSP70.

It is found in the cytoplasm. Its subcellular location is the cell projection. The protein localises to the cilium. The protein resides in the flagellum. It localises to the cytoskeleton. It is found in the flagellum axoneme. In terms of biological role, component of the nexin-dynein regulatory complex (N-DRC), a key regulator of ciliary/flagellar motility which maintains the alignment and integrity of the distal axoneme and regulates microtubule sliding in motile axonemes. Binds calmodulin when cellular Ca(2+) levels are low and thereby contributes to the regulation of calcium and calmodulin-dependent protein kinase IV (CAMK4) activity; contributes to the regulation of CAMK4 signaling cascades. Required for normal axoneme assembly in sperm flagella, normal sperm tail formation and for male fertility. This is Dynein regulatory complex protein 9 (IQCG) from Homo sapiens (Human).